The primary structure comprises 173 residues: Peptidoglycan-associated lipoprotein (173 aa).

The N-terminal stretch at 1 to 21 (MQLNKVLKGLMIALPVMAIAA) is a signal peptide. The N-palmitoyl cysteine moiety is linked to residue Cys22. Residue Cys22 is the site of S-diacylglycerol cysteine attachment. Positions 30–58 (NDGSEGMLGAGTGMDANGGNGNMSSEEQA) are disordered. Residues 35-50 (GMLGAGTGMDANGGNG) show a composition bias toward gly residues. The OmpA-like domain maps to 60–173 (LQMQQLQQNN…SKNRRAVLVY (114 aa)).

This sequence belongs to the Pal lipoprotein family. In terms of assembly, the Tol-Pal system is composed of five core proteins: the inner membrane proteins TolA, TolQ and TolR, the periplasmic protein TolB and the outer membrane protein Pal. They form a network linking the inner and outer membranes and the peptidoglycan layer.

It localises to the cell outer membrane. Functionally, part of the Tol-Pal system, which plays a role in outer membrane invagination during cell division and is important for maintaining outer membrane integrity. This Escherichia coli O157:H7 protein is Peptidoglycan-associated lipoprotein.